Reading from the N-terminus, the 268-residue chain is Secreted RxLR effector protein 6 (268 aa).

The N-terminal stretch at 1 to 19 is a signal peptide; sequence MRGAFYIAIALLVVRSRTA. Residues 48–63 carry the RxLR-dEER motif; it reads RYLRDGLAHSAANEER. Residues 90–123 form a disordered region; sequence IGGHSHTPKSKRKVNLSPAKSQSGIRKKSTSINK. The segment covering 107–123 has biased composition (polar residues); that stretch reads PAKSQSGIRKKSTSINK.

This sequence belongs to the RxLR effector family.

The protein resides in the secreted. Its subcellular location is the host nucleus. It localises to the host cytoplasm. Its function is as follows. Secreted effector that completely suppresses the host cell death induced by cell death-inducing proteins. The sequence is that of Secreted RxLR effector protein 6 from Plasmopara viticola (Downy mildew of grapevine).